The chain runs to 702 residues: Ribosomal RNA large subunit methyltransferase K/L (702 aa).

The 112-residue stretch at 43–154 (LVYQSLMWSR…KETASIALDL (112 aa)) folds into the THUMP domain.

Belongs to the methyltransferase superfamily. RlmKL family.

It localises to the cytoplasm. It catalyses the reaction guanosine(2445) in 23S rRNA + S-adenosyl-L-methionine = N(2)-methylguanosine(2445) in 23S rRNA + S-adenosyl-L-homocysteine + H(+). It carries out the reaction guanosine(2069) in 23S rRNA + S-adenosyl-L-methionine = N(2)-methylguanosine(2069) in 23S rRNA + S-adenosyl-L-homocysteine + H(+). In terms of biological role, specifically methylates the guanine in position 2445 (m2G2445) and the guanine in position 2069 (m7G2069) of 23S rRNA. This Shigella boydii serotype 18 (strain CDC 3083-94 / BS512) protein is Ribosomal RNA large subunit methyltransferase K/L.